The chain runs to 200 residues: MARFRGSNWKKSRRLGISLSGTGKELEKRPYAPGQHGPNQRKKLSEYGLQLREKQKLRYLYGMTERQFRNTFDIAGKKFGVHGENFMILLASRLDAVVYSLGLARTRRQARQLVNHGHILVDGKRVDIPSYSVKPSQTISVREKSQKLNVIVESVEINNFVPEYLNFDADSLTGTFVRLPERSELPAEINEQLIVEYYSR.

Residues 92–155 (SRLDAVVYSL…QKLNVIVESV (64 aa)) form the S4 RNA-binding domain.

The protein belongs to the universal ribosomal protein uS4 family. As to quaternary structure, part of the 30S ribosomal subunit. Contacts protein S5. The interaction surface between S4 and S5 is involved in control of translational fidelity.

Its function is as follows. One of the primary rRNA binding proteins, it binds directly to 16S rRNA where it nucleates assembly of the body of the 30S subunit. Functionally, with S5 and S12 plays an important role in translational accuracy. The sequence is that of Small ribosomal subunit protein uS4 from Staphylococcus aureus (strain MRSA252).